A 231-amino-acid chain; its full sequence is Ion-translocating oxidoreductase complex subunit E (231 aa).

6 consecutive transmembrane segments (helical) span residues 18–38 (ALVQ…ATNA), 39–59 (LGLG…ISTL), 63–83 (TPAE…VSAV), 86–106 (LINA…PLIV), 125–145 (ALSA…MFVL), and 182–202 (PFLL…MLAG).

This sequence belongs to the NqrDE/RnfAE family. The complex is composed of six subunits: RsxA, RsxB, RsxC, RsxD, RsxE and RsxG.

The protein localises to the cell inner membrane. Its function is as follows. Part of a membrane-bound complex that couples electron transfer with translocation of ions across the membrane. Required to maintain the reduced state of SoxR. This chain is Ion-translocating oxidoreductase complex subunit E, found in Shigella flexneri serotype 5b (strain 8401).